The primary structure comprises 492 residues: Glutamyl-tRNA(Gln) amidotransferase subunit A (492 aa).

Residues lysine 78 and serine 158 each act as charge relay system in the active site. Serine 182 serves as the catalytic Acyl-ester intermediate.

This sequence belongs to the amidase family. GatA subfamily. Heterotrimer of A, B and C subunits.

It carries out the reaction L-glutamyl-tRNA(Gln) + L-glutamine + ATP + H2O = L-glutaminyl-tRNA(Gln) + L-glutamate + ADP + phosphate + H(+). Functionally, allows the formation of correctly charged Gln-tRNA(Gln) through the transamidation of misacylated Glu-tRNA(Gln) in organisms which lack glutaminyl-tRNA synthetase. The reaction takes place in the presence of glutamine and ATP through an activated gamma-phospho-Glu-tRNA(Gln). In Rhodopseudomonas palustris (strain BisA53), this protein is Glutamyl-tRNA(Gln) amidotransferase subunit A.